Here is a 78-residue protein sequence, read N- to C-terminus: DNA-directed RNA polymerase subunit omega (78 aa).

This sequence belongs to the RNA polymerase subunit omega family. As to quaternary structure, in cyanobacteria the RNAP catalytic core is composed of 2 alpha, 1 beta, 1 beta', 1 gamma and 1 omega subunit. When a sigma factor is associated with the core the holoenzyme is formed, which can initiate transcription.

The enzyme catalyses RNA(n) + a ribonucleoside 5'-triphosphate = RNA(n+1) + diphosphate. Functionally, promotes RNA polymerase assembly. Latches the N- and C-terminal regions of the beta' subunit thereby facilitating its interaction with the beta and alpha subunits. The sequence is that of DNA-directed RNA polymerase subunit omega from Nostoc punctiforme (strain ATCC 29133 / PCC 73102).